Reading from the N-terminus, the 607-residue chain is MYSKLMFFFALCSISFLFTSEAASTMLLESSYLPLNQSYAPGFLYKRDMLPPPLQAVLTYTCPEPRPLAEESYNDLLRAISQKSSSDFQNAYSLALSFSSDFYQHGLKTLKDVSFLAVEKFLWGLTRLWSSLILASFSALWWLVSNFTTPVFCLALLYTVTKYMVKTVSFLFGGLPIWIISIAFSLLKKSFSALRSTPKCLYEKAIDGFKSFTIPQSPPKSCVIPITHASGNHAGYASCIKLYNGENALMTATHVLRDCPNAVAVSAKGLKTRIPLAEFKTIAKSDKGDVTLLRGPPNWEGLLGCKAANVITAANLAKCKASIYSFDRDGWVSSYAEIVGSEGTDVMVLSHTEGGHSGSPYFNGKTILGVHSGASATGNYNLMAPIPSLPGLTSPTYVFETTAPQGRVFAQEDIAEIEGLYAQVMKRVQQAEDFKPKTGKYWGDMEDDEDIFFESKEDLSGNGVRGTVRGTNGEGSSTPKTSNVDGKEMMEKIISSLVGKINLENIERKVIEEISAKAMKTPKSRRRRAPKKQPESSKDTSPRSTTGKYQPPHVRSPASVTAANCPNTTTPSKKKNLAGGRPSSGTIPRWVRKQAASAGPSSAPKQN.

An N-terminal signal peptide occupies residues 1 to 22 (MYSKLMFFFALCSISFLFTSEA). 3 consecutive transmembrane segments (helical) span residues 115–135 (FLAVEKFLWGLTRLWSSLILA), 137–157 (FSALWWLVSNFTTPVFCLALL), and 167–187 (TVSFLFGGLPIWIISIAFSLL). The Peptidase S39 domain maps to 206–400 (IDGFKSFTIP…GLTSPTYVFE (195 aa)). Catalysis depends on for protease activity residues histidine 254, aspartate 289, and serine 357. Disordered regions lie at residues 457 to 485 (EDLSGNGVRGTVRGTNGEGSSTPKTSNVD) and 517 to 607 (KAMK…PKQN). Over residues 474–484 (EGSSTPKTSNV) the composition is skewed to polar residues. Over residues 520–531 (KTPKSRRRRAPK) the composition is skewed to basic residues. The span at 532–541 (KQPESSKDTS) shows a compositional bias: basic and acidic residues. Over residues 558–571 (ASVTAANCPNTTTP) the composition is skewed to polar residues.

The protein belongs to the peptidase S39B family. Specific enzymatic cleavages in vivo yield mature proteins. The protease probably cleaves itself and releases the VPg protein.

It localises to the membrane. Its function is as follows. Precursor from which the VPg molecule is probably released at the onset of the RNA synthesis. Essential for virus replication. In Turnip yellows virus (isolate FL-1) (TuYV), this protein is Protein P1.